A 169-amino-acid polypeptide reads, in one-letter code: UPF0303 protein BCAN_A1444 (169 aa).

This sequence belongs to the UPF0303 family.

The protein is UPF0303 protein BCAN_A1444 of Brucella canis (strain ATCC 23365 / NCTC 10854 / RM-666).